A 99-amino-acid chain; its full sequence is DNA-binding protein HU (99 aa).

The protein belongs to the bacterial histone-like protein family. As to quaternary structure, homodimer.

Functionally, histone-like DNA-binding protein which is capable of wrapping DNA to stabilize it, and thus to prevent its denaturation under extreme environmental conditions. This chain is DNA-binding protein HU (hup), found in Rickettsia typhi (strain ATCC VR-144 / Wilmington).